Consider the following 224-residue polypeptide: tRNA (guanine-N(7)-)-methyltransferase (224 aa).

Residues glutamate 54, glutamate 79, glutamate 106, and aspartate 129 each coordinate S-adenosyl-L-methionine. Aspartate 129 is a catalytic residue. Residues lysine 133 and aspartate 165 each contribute to the substrate site.

Belongs to the class I-like SAM-binding methyltransferase superfamily. TrmB family.

It carries out the reaction guanosine(46) in tRNA + S-adenosyl-L-methionine = N(7)-methylguanosine(46) in tRNA + S-adenosyl-L-homocysteine. The protein operates within tRNA modification; N(7)-methylguanine-tRNA biosynthesis. Its function is as follows. Catalyzes the formation of N(7)-methylguanine at position 46 (m7G46) in tRNA. This chain is tRNA (guanine-N(7)-)-methyltransferase, found in Chlamydia muridarum (strain MoPn / Nigg).